The chain runs to 404 residues: Advanced glycosylation end product-specific receptor (404 aa).

The N-terminal stretch at 1–22 (MAAGTAVGAWVLVLSLWGAVVG) is a signal peptide. In terms of domain architecture, Ig-like V-type spans 23 to 116 (AQNITARIGE…KETKSNYRVR (94 aa)). Residues 23–342 (AQNITARIGE…VGGSGLGTLA (320 aa)) are Extracellular-facing. Residues Asn25 and Asn81 are each glycosylated (N-linked (GlcNAc...) asparagine). 2 disulfides stabilise this stretch: Cys38/Cys99 and Cys144/Cys208. Ig-like C2-type domains follow at residues 124-221 (PEIV…RALR) and 227-317 (PRVW…RAVS). A helical transmembrane segment spans residues 343-363 (LALGILGGLGTAALLIGVILW). At 364–404 (QRRQRRGEERKAPENQEEEEERAELNQSEEPEAGESSTGGP) the chain is on the cytoplasmic side. Residues 367-404 (QRRGEERKAPENQEEEEERAELNQSEEPEAGESSTGGP) are disordered. Positions 378 to 396 (NQEEEEERAELNQSEEPEA) are enriched in acidic residues. Ser391 carries the phosphoserine; by PKC/PRKCZ and ATM modification.

In terms of assembly, constitutive homodimer; disulfide-linked. Forms homooligomers. Interacts with S100A1 and APP. Interacts with S100B, S100A12 and S100A14. Interacts with TIRAP. Interacts with HMGB1. Interacts with LGP2; this interaction plays an important role in AGER-mediated pro-inflammatory responses and cytokine release. Interacts with double-strand break repair protein MRE11 which is a core component of the MRN complex. The interaction enhances MRE11 endonuclease activity and promotes DNA repair. Interacts with the MCM2-7 complex via interaction with complex member MCM2; the interaction is increased following DNA replication stress and stabilizes the MCM2-7 complex at replication forks. Interacts with longistatin, a protein from the saliva of the tick, Haemaphysalis longicornis; the interaction attenuates AGER-mediated production of reactive oxygen species (ROS), activation of NF-kappa-B and expression of adhesion molecules and cytokines in human endothelial cells. Post-translationally, phosphorylated on its cytoplasmic domain by PKCzeta/PRKCZ upon ligand binding. Phosphorylated by ATM following DNA damage. In terms of processing, targeted by the ubiquitin E3 ligase subunit FBXO10 to mediate its ubiquitination and degradation. In terms of tissue distribution, endothelial cells. Increased expression in pre-term labor and preeclampsia placentas compared to controls.

It is found in the cell membrane. The protein localises to the cell projection. It localises to the phagocytic cup. The protein resides in the early endosome. Its subcellular location is the nucleus. It is found in the secreted. In terms of biological role, cell surface pattern recognition receptor that senses endogenous stress signals with a broad ligand repertoire including advanced glycation end products, S100 proteins, high-mobility group box 1 protein/HMGB1, amyloid beta/APP oligomers, nucleic acids, histones, phospholipids and glycosaminoglycans. Advanced glycosylation end products are nonenzymatically glycosylated proteins which accumulate in vascular tissue in aging and at an accelerated rate in diabetes. These ligands accumulate at inflammatory sites during the pathogenesis of various diseases including diabetes, vascular complications, neurodegenerative disorders and cancers, and RAGE transduces their binding into pro-inflammatory responses. Upon ligand binding, uses TIRAP and MYD88 as adapters to transduce the signal ultimately leading to the induction of inflammatory cytokines IL6, IL8 and TNFalpha through activation of NF-kappa-B. Interaction with S100A12 on endothelium, mononuclear phagocytes, and lymphocytes triggers cellular activation, with generation of key pro-inflammatory mediators. Interaction with S100B after myocardial infarction may play a role in myocyte apoptosis by activating ERK1/2 and p53/TP53 signaling. Contributes to the translocation of amyloid-beta peptide (ABPP) across the cell membrane from the extracellular to the intracellular space in cortical neurons. ABPP-initiated RAGE signaling, especially stimulation of p38 mitogen-activated protein kinase (MAPK), has the capacity to drive a transport system delivering ABPP as a complex with RAGE to the intraneuronal space. Participates in endothelial albumin transcytosis together with HMGB1 through the RAGE/SRC/Caveolin-1 pathway, leading to endothelial hyperpermeability. Mediates the loading of HMGB1 in extracellular vesicles (EVs) that shuttle HMGB1 to hepatocytes by transferrin-mediated endocytosis and subsequently promote hepatocyte pyroptosis by activating the NLRP3 inflammasome. Binds to DNA and promotes extracellular hypomethylated DNA (CpG DNA) uptake by cells via the endosomal route to activate inflammatory responses. Mediates phagocytosis by non-professional phagocytes (NPP) and this is enhanced by binding to ligands including RNA, DNA, HMGB1 and histones. Promotes NPP-mediated phagocytosis of Saccharomyces cerevisiae spores by binding to RNA attached to the spore wall. Also promotes NPP-mediated phagocytosis of apoptotic cells. Following DNA damage, recruited to DNA double-strand break sites where it colocalizes with the MRN repair complex via interaction with double-strand break repair protein MRE11. Enhances the endonuclease activity of MRE11, promoting the end resection of damaged DNA. Promotes DNA damage repair in trophoblasts which enhances trophoblast invasion and contributes to placental development and maintenance. Protects cells from DNA replication stress by localizing to damaged replication forks where it stabilizes the MCM2-7 complex and promotes faithful progression of the replication fork. Mediates the production of reactive oxygen species (ROS) in human endothelial cells. This Homo sapiens (Human) protein is Advanced glycosylation end product-specific receptor (AGER).